The following is a 1407-amino-acid chain: ABC transporter B family member 6 (1407 aa).

Residues 18-65 (LTPVSEVSEPPESPSPYLDPGAEHGGTGTAAQADDEEEMEEPEEMEPP) are disordered. Residues 50–63 (ADDEEEMEEPEEME) are compositionally biased toward acidic residues. A run of 4 helical transmembrane segments spans residues 84 to 104 (VLMV…IVYL), 139 to 159 (IVYI…CWIL), 212 to 231 (VGNY…IGFV), and 236 to 258 (IALI…NIFL). The ABC transmembrane type-1 1 domain maps to 86-379 (MVFGSVAAAA…AATNFYSFDQ (294 aa)). A glycan (N-linked (GlcNAc...) asparagine) is linked at Asn-291. Transmembrane regions (helical) follow at residues 310-330 (GILI…LAIC) and 351-371 (GEII…NQAA). The ABC transporter 1 domain maps to 412 to 647 (IEFRNVYFSY…GNLYAELLKC (236 aa)). 447–454 (GRNGSGKS) is an ATP binding site. Asn-449 and Asn-663 each carry an N-linked (GlcNAc...) asparagine glycan. Disordered regions lie at residues 670-696 (AERD…SLQR) and 709-815 (NSEE…DGQH). Asn-727 is a glycosylation site (N-linked (GlcNAc...) asparagine). Positions 733 to 755 (VGEKEPTIKRQDSFEMRLPELPK) are enriched in basic and acidic residues. Residues 761-770 (PQRQKSNGSD) are compositionally biased toward polar residues. Asn-767 carries an N-linked (GlcNAc...) asparagine glycan. Residues 835 to 1123 (AVLGSIGAAI…PFGLAPYILK (289 aa)) enclose the ABC transmembrane type-1 2 domain. A run of 6 helical transmembrane segments spans residues 840–860 (IGAA…ALVV), 880–900 (LIIA…HFYF), 958–978 (IFIQ…LLGW), 982–1002 (LVAL…KLWL), 1061–1081 (IGFA…LLLW), and 1102–1122 (MVFS…PYIL). The ABC transporter 2 domain maps to 1158 to 1395 (IELKNIDFCY…NGLYVRLMQP (238 aa)). Residue Asn-1178 is glycosylated (N-linked (GlcNAc...) asparagine). 1193 to 1200 (GVSGSGKS) contributes to the ATP binding site. 2 N-linked (GlcNAc...) asparagine glycosylation sites follow: Asn-1260 and Asn-1346.

The protein belongs to the ABC transporter superfamily. ABCB family. Multidrug resistance exporter (TC 3.A.1.201) subfamily. As to expression, expressed in aerial tissues.

It localises to the membrane. The catalysed reaction is (indol-3-yl)acetate(in) + ATP + H2O = (indol-3-yl)acetate(out) + ADP + phosphate + H(+). Functionally, probable auxin efflux transporter that contributes, together with ABCB20 and in a FKBP42/TWD1-dependent manner, to the regulation of leaf position and morphology, internode distribution, roots development, and inflorescence organization, probably by modulating auxin repartition. This chain is ABC transporter B family member 6, found in Arabidopsis thaliana (Mouse-ear cress).